Reading from the N-terminus, the 268-residue chain is MAVGKNKGLSKGGKKGGKKKVVDPFSRKDWYDVKAPNMFQTRQIGKTLVNRTQGQRIASDYLKGRVFEVSLADLQKDIDPERSFRKFRLIAEDVQDRNVLCNFHGMDLTTDKYRSMVKKWQTLIEAIVEAKTVDGYLLRVFCIGFTFKDQQSQRKTCYAQQSQVRKIRARMTDIITNEVSGADLKQLVNKLALDSIAKDIEKSCQRIYPLHDVYIRKVKVLKKPRFDISKLLELHGDGGGKTTEAVVSAEGAVIDRPEGYEPPVQEAV.

Residues 1–21 are disordered; the sequence is MAVGKNKGLSKGGKKGGKKKV.

It belongs to the eukaryotic ribosomal protein eS1 family. As to quaternary structure, component of the small ribosomal subunit. Mature ribosomes consist of a small (40S) and a large (60S) subunit. The 40S subunit contains about 33 different proteins and 1 molecule of RNA (18S). The 60S subunit contains about 49 different proteins and 3 molecules of RNA (28S, 5.8S and 5S).

Its subcellular location is the cytoplasm. In terms of biological role, essential for oogenesis; required for late follicle cell development. The chain is Small ribosomal subunit protein eS1 from Drosophila mojavensis (Fruit fly).